A 72-amino-acid polypeptide reads, in one-letter code: C-hordein (72 aa).

Over residues 1 to 36 (FPQPQEPFPQQPQQPFPLQPQQPFPQQPQQPFPQPQ) the composition is skewed to pro residues. A disordered region spans residues 1–61 (FPQPQEPFPQ…QQPFPLQPHQ (61 aa)). The segment covering 37–50 (QPFRQQAELIIPQQ) has biased composition (low complexity).

Developing endosperm.

Sulfur-poor seed storage protein. The protein is C-hordein of Hordeum vulgare (Barley).